The primary structure comprises 161 residues: 2-C-methyl-D-erythritol 2,4-cyclodiphosphate synthase (161 aa).

2 residues coordinate a divalent metal cation: D10 and H12. 4-CDP-2-C-methyl-D-erythritol 2-phosphate is bound by residues 10–12 (DVH) and 36–37 (HS). Position 44 (H44) interacts with a divalent metal cation. Residues 58 to 60 (DIG), 134 to 137 (TTTE), F141, and R144 contribute to the 4-CDP-2-C-methyl-D-erythritol 2-phosphate site.

This sequence belongs to the IspF family. In terms of assembly, homotrimer. It depends on a divalent metal cation as a cofactor.

It catalyses the reaction 4-CDP-2-C-methyl-D-erythritol 2-phosphate = 2-C-methyl-D-erythritol 2,4-cyclic diphosphate + CMP. The protein operates within isoprenoid biosynthesis; isopentenyl diphosphate biosynthesis via DXP pathway; isopentenyl diphosphate from 1-deoxy-D-xylulose 5-phosphate: step 4/6. In terms of biological role, involved in the biosynthesis of isopentenyl diphosphate (IPP) and dimethylallyl diphosphate (DMAPP), two major building blocks of isoprenoid compounds. Catalyzes the conversion of 4-diphosphocytidyl-2-C-methyl-D-erythritol 2-phosphate (CDP-ME2P) to 2-C-methyl-D-erythritol 2,4-cyclodiphosphate (ME-CPP) with a corresponding release of cytidine 5-monophosphate (CMP). The chain is 2-C-methyl-D-erythritol 2,4-cyclodiphosphate synthase from Parabacteroides distasonis (strain ATCC 8503 / DSM 20701 / CIP 104284 / JCM 5825 / NCTC 11152).